The sequence spans 212 residues: RNA chaperone ProQ (212 aa).

Composition is skewed to basic and acidic residues over residues 102-124 and 132-144; these read ALKESKERVFASRRTNTKEEKAK and RKADAAAKSDKPK. The disordered stretch occupies residues 102 to 149; sequence ALKESKERVFASRRTNTKEEKAKQPRRPAPRKADAAAKSDKPKAAPKA.

Belongs to the ProQ family.

It localises to the cytoplasm. Its function is as follows. RNA chaperone with significant RNA binding, RNA strand exchange and RNA duplexing activities. The polypeptide is RNA chaperone ProQ (Aeromonas hydrophila subsp. hydrophila (strain ATCC 7966 / DSM 30187 / BCRC 13018 / CCUG 14551 / JCM 1027 / KCTC 2358 / NCIMB 9240 / NCTC 8049)).